The sequence spans 265 residues: Undecaprenyl-diphosphatase (265 aa).

7 helical membrane-spanning segments follow: residues 38 to 58 (RSDF…CLAL), 75 to 95 (RDYV…GLIV), 108 to 128 (PVAW…HFAG), 135 to 155 (VVTW…GVFP), 181 to 201 (FVFM…LLEM), 215 to 235 (VAVA…WLLG), and 244 to 264 (VFAV…PAAA).

The protein belongs to the UppP family.

It is found in the cell inner membrane. The enzyme catalyses di-trans,octa-cis-undecaprenyl diphosphate + H2O = di-trans,octa-cis-undecaprenyl phosphate + phosphate + H(+). Catalyzes the dephosphorylation of undecaprenyl diphosphate (UPP). Confers resistance to bacitracin. The chain is Undecaprenyl-diphosphatase from Xanthomonas axonopodis pv. citri (strain 306).